Consider the following 716-residue polypeptide: Leucine-rich repeat neuronal protein 1 (716 aa).

The N-terminal stretch at 1–25 is a signal peptide; it reads MARMSFVLAAYQMVLSLLMTSLTGS. The LRRNT domain occupies 26 to 72; it reads SLQSSECPQLCVCEIRPWFTPQSTYREATTVDCNDLRLTRIPSNLSS. Over 26–631 the chain is Extracellular; sequence SLQSSECPQL…DISDQETSTA (606 aa). N-linked (GlcNAc...) asparagine glycosylation occurs at N69. 9 LRR repeats span residues 73-95, 96-117, 120-141, 144-165, 168-189, 192-213, 216-237, 240-261, and 264-285; these read DTQVLLLQSNNIAKTVDELQQLF, NLTELDFSQNNFTNIKEVGLAN, QLTTLHLEENQITEMNDYCLQD, NLQELYINHNQISTISANAFSG, NLLRLHLNSNKLKVIDSRWFDS, NLEILMIGENPVIGILDMNFKP, NLRSLVLAGMYLTDIPGNALVG, SLESLSFYDNKLVKVPQLALQK, and NLKFLDLNKNPIHKIQEGDFKN. 3 N-linked (GlcNAc...) asparagine glycosylation sites follow: N96, N106, and N117. The region spanning 371–424 is the LRRCT domain; that stretch reads NPLRCDCVIHWINSNKTNIRFMEPLSMFCAMPPEYRGQQVKEVLIQDSSEQCLP. N385 is a glycosylation site (N-linked (GlcNAc...) asparagine). Residues 424 to 515 form the Ig-like C2-type domain; that stretch reads PMISHDTFPN…GADTRVVMIK (92 aa). C447 and C499 form a disulfide bridge. N517, N582, and N611 each carry an N-linked (GlcNAc...) asparagine glycan. Residues 525–617 form the Fibronectin type-III domain; that stretch reads QVLKIYVKQT…SCVNVTTKNA (93 aa). Residues 632-652 traverse the membrane as a helical segment; the sequence is LAAVMGSMFAVISLASIAVYI. Residues 653 to 716 lie on the Cytoplasmic side of the membrane; that stretch reads AKRFKRKNYH…VDTSRSYYMW (64 aa). The segment covering 691–700 has biased composition (basic and acidic residues); it reads DSEKDKDGTA. A disordered region spans residues 691–716; sequence DSEKDKDGTADTKPTQVDTSRSYYMW. The span at 702 to 716 shows a compositional bias: polar residues; it reads TKPTQVDTSRSYYMW.

It is found in the membrane. The polypeptide is Leucine-rich repeat neuronal protein 1 (LRRN1) (Bos taurus (Bovine)).